The sequence spans 79 residues: Succinate dehydrogenase assembly factor 1, mitochondrial (79 aa).

Belongs to the complex I LYR family. SDHAF1 subfamily. Interacts with sdh2 within an sdh1-sdh2 subcomplex.

Its subcellular location is the mitochondrion matrix. In terms of biological role, plays an essential role in the assembly of succinate dehydrogenase (SDH), an enzyme complex (also referred to as respiratory complex II) that is a component of both the tricarboxylic acid (TCA) cycle and the mitochondrial electron transport chain, and which couples the oxidation of succinate to fumarate with the reduction of ubiquinone (coenzyme Q) to ubiquinol. Promotes maturation of the iron-sulfur protein subunit sdh2 of the SDH catalytic dimer, protecting it from the deleterious effects of oxidants. May act together with SDHAF3. This chain is Succinate dehydrogenase assembly factor 1, mitochondrial, found in Schizosaccharomyces pombe (strain 972 / ATCC 24843) (Fission yeast).